A 178-amino-acid chain; its full sequence is PRA1 family protein 2 (178 aa).

Residues 1 to 41 (MSEVRLPPLRALDDFVLGSARLAAPDPGDPQRWCHRVINNL) are Cytoplasmic-facing. A helical transmembrane segment spans residues 42–62 (LYYQTNYLLCFGISLALAGYI). Over 63-64 (RP) the chain is Extracellular. Residues 65–85 (LHTLLSALVVVVALGVLVWAA) form a helical membrane-spanning segment. At 86–96 (ETRAAVRRCRR) the chain is on the cytoplasmic side. A helical membrane pass occupies residues 97-119 (SHPAACLAAVLAISLFILWAVGG). Topologically, residues 120-122 (AFT) are extracellular. Residues 123–140 (FLLSITAPVFLILLHASL) form a helical membrane-spanning segment. Topologically, residues 141-178 (RLRNLKNKIENKIESIGLKRTPMGLLLEALGQEQEAGS) are cytoplasmic.

It belongs to the PRA1 family. As to quaternary structure, interacts with CCR5 and GDE1.

The protein resides in the endosome membrane. Its function is as follows. May be involved in ER/Golgi transport and vesicular traffic. Plays a proapoptotic role in cerulenin-induced neuroblastoma apoptosis. The sequence is that of PRA1 family protein 2 (Praf2) from Mus musculus (Mouse).